Here is a 122-residue protein sequence, read N- to C-terminus: Large ribosomal subunit protein uL14c (122 aa).

Belongs to the universal ribosomal protein uL14 family. Part of the 50S ribosomal subunit.

Its subcellular location is the plastid. It is found in the chloroplast. Functionally, binds to 23S rRNA. The chain is Large ribosomal subunit protein uL14c from Vitis vinifera (Grape).